Reading from the N-terminus, the 176-residue chain is MAEEEVDYVFKVVLNGDSAVGKSQLRARFTRDEFSMDSKATIRCRFQYSNAPYYKGAVGAMLVYDMTIRESFEHIPQWLEELRVHADKNIVIILIGNKTDLENQRSVPVEDAKEFAEKEGLFFLETSALNSTNVENSFNTLLTEIFNKVNKKNLAKTTVSCSSQVSLLRPPCVAAQ.

The protein belongs to the small GTPase superfamily. Rab family.

The protein is Putative Ras-related protein RABA4e (RABA4E) of Arabidopsis thaliana (Mouse-ear cress).